The chain runs to 483 residues: Glutamyl-tRNA(Gln) amidotransferase subunit A (483 aa).

Active-site charge relay system residues include Lys-76 and Ser-151. Ser-175 serves as the catalytic Acyl-ester intermediate.

Belongs to the amidase family. GatA subfamily. In terms of assembly, heterotrimer of A, B and C subunits.

The catalysed reaction is L-glutamyl-tRNA(Gln) + L-glutamine + ATP + H2O = L-glutaminyl-tRNA(Gln) + L-glutamate + ADP + phosphate + H(+). Allows the formation of correctly charged Gln-tRNA(Gln) through the transamidation of misacylated Glu-tRNA(Gln) in organisms which lack glutaminyl-tRNA synthetase. The reaction takes place in the presence of glutamine and ATP through an activated gamma-phospho-Glu-tRNA(Gln). This chain is Glutamyl-tRNA(Gln) amidotransferase subunit A, found in Pseudomonas entomophila (strain L48).